Reading from the N-terminus, the 97-residue chain is AEVKLGSDDGGLVFSPSSFTVAAGEKITFKNNAGFPHNIVFDEDEVPAGVNAEKISQPEYLNGAGETYEVTLTEKGTYKFYCEPHAGAGMKGEVTVN.

The Plastocyanin-like domain occupies 1–97 (AEVKLGSDDG…AGMKGEVTVN (97 aa)). Residues H37, C82, H85, and M90 each coordinate Cu cation.

It belongs to the plastocyanin family. The cofactor is Cu(2+).

The protein resides in the plastid. It is found in the chloroplast thylakoid membrane. Its function is as follows. Participates in electron transfer between P700 and the cytochrome b6-f complex in photosystem I. The protein is Plastocyanin A/B (PETE) of Petroselinum crispum (Parsley).